The chain runs to 461 residues: Fumarate hydratase class II (461 aa).

Substrate contacts are provided by residues 99 to 101, 130 to 133, 140 to 142, and threonine 188; these read SGT, HPND, and STN. Residue histidine 189 is the Proton donor/acceptor of the active site. Serine 319 is an active-site residue. Substrate is bound by residues serine 320 and 325–327; that span reads KVN.

It belongs to the class-II fumarase/aspartase family. Fumarase subfamily. Homotetramer.

The protein localises to the cytoplasm. It carries out the reaction (S)-malate = fumarate + H2O. It functions in the pathway carbohydrate metabolism; tricarboxylic acid cycle; (S)-malate from fumarate: step 1/1. In terms of biological role, involved in the TCA cycle. Catalyzes the stereospecific interconversion of fumarate to L-malate. The protein is Fumarate hydratase class II of Prochlorococcus marinus subsp. pastoris (strain CCMP1986 / NIES-2087 / MED4).